Reading from the N-terminus, the 485-residue chain is REST corepressor 1 (485 aa).

Disordered regions lie at residues 1-26 (MPAM…ASAS) and 49-110 (AAAS…VGPQ). Composition is skewed to low complexity over residues 49 to 64 (AAAS…AAAA) and 74 to 95 (AAAA…SGSS). Residues 78–257 (PNGNSSSNSW…RHARKQKRER (180 aa)) form an interaction with HDAC1 region. Residues 103-189 (GGMRVGPQYQ…KSLADLPNFT (87 aa)) form the ELM2 domain. Residue Lys-122 forms a Glycyl lysine isopeptide (Lys-Gly) (interchain with G-Cter in SUMO2) linkage. Ser-127 carries the post-translational modification Phosphoserine. One can recognise an SANT 1 domain in the interval 190 to 241 (PFPDEWTVEDKVLFEQAFSFHGKTFHRIQQMLPDKSIASLVKFYYSWKKTRT). Residues 244–273 (SVMDRHARKQKREREESEDELEEANGNNPI) are a coiled coil. Residues 244-314 (SVMDRHARKQ…AKNRAKRKPP (71 aa)) are disordered. The residue at position 260 (Ser-260) is a Phosphoserine. Residues 278–288 (DQNKESKKEVP) show a composition bias toward basic and acidic residues. The segment at 296-384 (VKKEKHSTQA…LPEVIQKCNA (89 aa)) is interaction with KDM1A. Lys-297 is covalently cross-linked (Glycyl lysine isopeptide (Lys-Gly) (interchain with G-Cter in SUMO2)). The stretch at 334 to 369 (ATTVLRQLDMELVSVKRQIQNIKQTNSALKEKLDGG) forms a coiled coil. The 52-residue stretch at 381–432 (KCNARWTTEEQLLAVQAIRKYGRDFQAISDVIGNKSVVQVKNFFVNYRRRFN) folds into the SANT 2 domain. The segment at 442 to 485 (AEHGKEETNGPSNQKPVKSPDNSIKMPEEEDEAPVLDVRYASAS) is disordered. The span at 450–463 (NGPSNQKPVKSPDN) shows a compositional bias: polar residues. Phosphoserine is present on Ser-460. Residue Lys-466 forms a Glycyl lysine isopeptide (Lys-Gly) (interchain with G-Cter in SUMO2) linkage.

Belongs to the CoREST family. In terms of assembly, interacts directly with GFI1 and GFI1B in a RCOR/GFI/KDM1A/HDAC complex. Interacts with INMS1. Component of a BHC histone deacetylase complex that contains HDAC1, HDAC2, HMG20B/BRAF35, KDM1A, RCOR1/CoREST and PHF21A/BHC80. The BHC complex may also contain ZMYM2, ZNF217, ZMYM3, GSE1 and GTF2I. Interacts with REST. Interacts with the SMARCE1/BAF57, suggesting that the BHC complex may recruit the ATP-dependent chromatin-remodeling SWI-SNF complex. Interacts with SOX2. (Microbial infection) Interacts with herpes virus HSV-1 ICP0 protein; the interaction leads to the disruption of the BHC complex, thereby preventing the BHC complex from repressing transcription of viral genes. Post-translationally, phosphorylated by HSV-1 protein kinases in case of infection. In terms of tissue distribution, ubiquitously expressed.

It is found in the nucleus. In terms of biological role, essential component of the BHC complex, a corepressor complex that represses transcription of neuron-specific genes in non-neuronal cells. The BHC complex is recruited at RE1/NRSE sites by REST and acts by deacetylating and demethylating specific sites on histones, thereby acting as a chromatin modifier. In the BHC complex, it serves as a molecular beacon for the recruitment of molecular machinery, including MeCP2 and SUV39H1, that imposes silencing across a chromosomal interval. Plays a central role in demethylation of Lys-4 of histone H3 by promoting demethylase activity of KDM1A on core histones and nucleosomal substrates. It also protects KDM1A from the proteasome. Component of a RCOR/GFI/KDM1A/HDAC complex that suppresses, via histone deacetylase (HDAC) recruitment, a number of genes implicated in multilineage blood cell development and controls hematopoietic differentiation. This is REST corepressor 1 (RCOR1) from Homo sapiens (Human).